Here is a 232-residue protein sequence, read N- to C-terminus: Large ribosomal subunit protein uL1 (232 aa).

Belongs to the universal ribosomal protein uL1 family. In terms of assembly, part of the 50S ribosomal subunit.

Functionally, binds directly to 23S rRNA. The L1 stalk is quite mobile in the ribosome, and is involved in E site tRNA release. Its function is as follows. Protein L1 is also a translational repressor protein, it controls the translation of the L11 operon by binding to its mRNA. This is Large ribosomal subunit protein uL1 from Christiangramia forsetii (strain DSM 17595 / CGMCC 1.15422 / KT0803) (Gramella forsetii).